The sequence spans 1518 residues: MYGTWFTTGKVTDLLARTGLDRVPVWVPVVLGVVLMAFVGSVRIDPALQGWVSIGTVTLLLVLNRRRGRGITVFLMMLSLLVSLRYIVWRLTATVQFSNWLQTALAVLLLLAEAYALMTLCLSYFQMAWPLRRREHPLPEDMAQWPSVDVFVPSYNEELSLVRSTVLGALDLDWPADRLNVYILDDGRRKAFHDFAVEAGAGYIIRAENNHAKAGNLNHALAVTDSPFAVIFDCDHVPTRGFLRRTIGWMMADPNLALLQTPHHFYAPDPFQRNLAGGMHVPPEGNMFYGLVQDGNDFWDATFFCGSCAIIRREAVMGIGGFATETVTEDAHTALKMQRRGWGTAYLREPLAAGLATERLILHIGQRVRWARGMIQIMRLDNPMLGAGLRWEQRLCYLSAMSHFLFAIPRLTFLVSPLAFLFLGQNIIAASPLAISVYALPHIFHSVITLSRIEGRWRYSFWSEIYETSLALFLVRITIVTLLQPHKGKFNVTDKGGLLARGYFDWDAVYPNVILAGVLCAALLRGVFGIVWQFHDRLALQSFILNTLWVVISLIIVLASIAVGRETRQTRNAPRVSVRLPVVVTDAHGRQMEGHTHDISLGGLAVGTRLATPDMVGGEVTVRYDSARDGIHVGVPARVLDARDGTLRLRWAVRDLEDERQVVSMVFGRNDAWAGWADFAPDRPLRSLAMVFRSIGGLLRRRPAEAPRALHEMGEGELPATEEKLEKQSFVLKPVPRSARHGATASAALFVAFTALVPAAMAQEAPSPDQSGVTAETPFGDSNTGVVPDALPAIDPAVADRISDAEVTRTLTFRNLGATTGPLTLRGYSPLQGLDVVVPANRVVTHAQLTLSGALSPSLLPEANAVTVTLNEQYVGTLKVDPQHPQFGPVSFDIDPLYFTGDNKLNFHFAGEYRRDCNDLFNEILWARISDMSRITLTTVRITPERKLSRLPAPFFDPNQRSTLRVPVVLPATGDRGALRAAGLVASWFGRIADFRKLSFPVSTTIPASGNAVEVGVNLPVDAEGGRPAGPMLAEVANPNDRWGTVLVVTGRTAQEVEVAARALVFSPDTLGGVASKVVSDVSLETRHPYDAPAFVPTDRPVRFGELVGAADLQGGGFAPAGMTLPFHLPPDLYTWRGRPFLMNMWVRAPGGPVVDLETSRVDVSLNNNYLQSYTLSPPGLWRKWSERLVNQHAGAVGHVTALPPWLLFGQNQLQFNFDARPIDRGACRRTPGDIHMSVDSDSTLDFRRGYHFAEMPNLSYFAEAAFPFSRMADLSETTVVLPDHPDTGTTGAFLDLMGFFGASTWYPAAGVTVMGADEVAQTPPKGDIVVLGTAAQLGGAASGLLARSPYVIHDRHITVGQRMGLQGIWYLFQDHDHAGLKDGVTANLNAPIAEAGVLLAAQSPYDSQRSVVAFTGDTPERIHDLVLSLRNKGDLPSLQGDLVLKNGDRFTSYRTAPVYTVGSLPLWLRLDWFLGHHPSALYLAGLAGAGLAALGVWAWLRGWSRRRIARDDLTGEL.

The catalytic stretch occupies residues 1–731 (MYGTWFTTGK…EEKLEKQSFV (731 aa)). The next 3 helical transmembrane spans lie at 24–44 (PVWV…SVRI), 71–91 (ITVF…VWRL), and 105–125 (LAVL…LSYF). A catalytic subdomain A region spans residues 144-237 (QWPSVDVFVP…FAVIFDCDHV (94 aa)). Residues D186 and D330 contribute to the active site. Positions 314–374 (EAVMGIGGFA…GQRVRWARGM (61 aa)) are catalytic subdomain B. 5 consecutive transmembrane segments (helical) span residues 404-424 (FLFA…LFLG), 428-448 (IAAS…HSVI), 465-485 (IYET…LLQP), 514-534 (ILAG…VWQF), and 543-563 (FILN…SIAV). A PilZ domain is found at 569 to 668 (QTRNAPRVSV…ERQVVSMVFG (100 aa)). The cyclic di-GMP binding domain stretch occupies residues 732–1518 (LKPVPRSARH…IARDDLTGEL (787 aa)). Positions 765 to 785 (APSPDQSGVTAETPFGDSNTG) are disordered. Over residues 768 to 785 (PDQSGVTAETPFGDSNTG) the composition is skewed to polar residues. Residues 1481–1501 (ALYLAGLAGAGLAALGVWAWL) form a helical membrane-spanning segment.

This sequence in the N-terminal section; belongs to the glycosyltransferase 2 family. It in the C-terminal section; belongs to the AcsB/BcsB family.

Its subcellular location is the cell inner membrane. It catalyses the reaction [(1-&gt;4)-beta-D-glucosyl](n) + UDP-alpha-D-glucose = [(1-&gt;4)-beta-D-glucosyl](n+1) + UDP + H(+). It participates in glycan metabolism; bacterial cellulose biosynthesis. This is Putative cellulose synthase 3 (bcsABII-B) from Komagataeibacter xylinus (Gluconacetobacter xylinus).